A 360-amino-acid polypeptide reads, in one-letter code: Phosphoserine aminotransferase (360 aa).

Arg42 lines the L-glutamate pocket. Pyridoxal 5'-phosphate contacts are provided by residues 76–77 (AS), Trp102, Thr152, Asp172, and Gln195. Position 196 is an N6-(pyridoxal phosphate)lysine (Lys196). Residue 237–238 (NT) coordinates pyridoxal 5'-phosphate.

The protein belongs to the class-V pyridoxal-phosphate-dependent aminotransferase family. SerC subfamily. Homodimer. Pyridoxal 5'-phosphate serves as cofactor.

It localises to the cytoplasm. The catalysed reaction is O-phospho-L-serine + 2-oxoglutarate = 3-phosphooxypyruvate + L-glutamate. The enzyme catalyses 4-(phosphooxy)-L-threonine + 2-oxoglutarate = (R)-3-hydroxy-2-oxo-4-phosphooxybutanoate + L-glutamate. The protein operates within amino-acid biosynthesis; L-serine biosynthesis; L-serine from 3-phospho-D-glycerate: step 2/3. In terms of biological role, catalyzes the reversible conversion of 3-phosphohydroxypyruvate to phosphoserine and of 3-hydroxy-2-oxo-4-phosphonooxybutanoate to phosphohydroxythreonine. In Bacillus cereus (strain ATCC 10987 / NRS 248), this protein is Phosphoserine aminotransferase.